The following is a 66-amino-acid chain: Large ribosomal subunit protein bL35 (66 aa).

It belongs to the bacterial ribosomal protein bL35 family.

This chain is Large ribosomal subunit protein bL35, found in Azorhizobium caulinodans (strain ATCC 43989 / DSM 5975 / JCM 20966 / LMG 6465 / NBRC 14845 / NCIMB 13405 / ORS 571).